Here is an 815-residue protein sequence, read N- to C-terminus: DNA gyrase subunit B (815 aa).

The disordered stretch occupies residues methionine 1 to aspartate 21. In terms of domain architecture, Toprim spans serine 430–serine 545. Mg(2+)-binding residues include glutamate 436, aspartate 509, and aspartate 511.

The protein belongs to the type II topoisomerase GyrB family. In terms of assembly, heterotetramer, composed of two GyrA and two GyrB chains. In the heterotetramer, GyrA contains the active site tyrosine that forms a transient covalent intermediate with DNA, while GyrB binds cofactors and catalyzes ATP hydrolysis. Mg(2+) serves as cofactor. Requires Mn(2+) as cofactor. Ca(2+) is required as a cofactor.

Its subcellular location is the cytoplasm. The catalysed reaction is ATP-dependent breakage, passage and rejoining of double-stranded DNA.. In terms of biological role, a type II topoisomerase that negatively supercoils closed circular double-stranded (ds) DNA in an ATP-dependent manner to modulate DNA topology and maintain chromosomes in an underwound state. Negative supercoiling favors strand separation, and DNA replication, transcription, recombination and repair, all of which involve strand separation. Also able to catalyze the interconversion of other topological isomers of dsDNA rings, including catenanes and knotted rings. Type II topoisomerases break and join 2 DNA strands simultaneously in an ATP-dependent manner. This is DNA gyrase subunit B from Myxococcus xanthus.